The sequence spans 357 residues: Non-structural protein NS2 (357 aa).

Disordered regions lie at residues Asn-163–Met-199 and Leu-228–His-267. Acidic residues-rich tracts occupy residues Glu-230–Asp-241 and Asp-250–Asp-260.

The protein belongs to the orbivirus non-structural protein NS2 family.

In terms of biological role, single-stranded RNA-binding protein. The chain is Non-structural protein NS2 (Segment-8) from Antilocapra americana (Pronghorn).